Consider the following 196-residue polypeptide: Probable GTP-binding protein EngB (196 aa).

The EngB-type G domain maps to 22 to 196 (NLPEIALSGR…GNWIEEKISK (175 aa)). GTP-binding positions include 30–37 (GRSNVGKS), 57–61 (GKTQT), 75–78 (DVPG), 142–145 (TKID), and 175–177 (FSS). Mg(2+) contacts are provided by S37 and T59.

Belongs to the TRAFAC class TrmE-Era-EngA-EngB-Septin-like GTPase superfamily. EngB GTPase family. Requires Mg(2+) as cofactor.

Necessary for normal cell division and for the maintenance of normal septation. The polypeptide is Probable GTP-binding protein EngB (Lactobacillus helveticus (strain DPC 4571)).